Here is a 99-residue protein sequence, read N- to C-terminus: Acylphosphatase-1 (99 aa).

Position 2 is an N-acetylalanine (Ala2). Residues 9–99 (SVDYEVSGRV…LEHTDFQIRK (91 aa)) form the Acylphosphatase-like domain. Residues Arg24 and Asn42 contribute to the active site.

It belongs to the acylphosphatase family. As to expression, organ-common type isozyme is found in many different tissues.

The catalysed reaction is an acyl phosphate + H2O = a carboxylate + phosphate + H(+). The protein is Acylphosphatase-1 (ACYP1) of Gallus gallus (Chicken).